A 499-amino-acid polypeptide reads, in one-letter code: Gamma-aminobutyric acid receptor subunit beta (499 aa).

Residues 1 to 23 (MWGIIVPFFSASLMCSLVAVVRC) form the signal peptide. The Extracellular portion of the chain corresponds to 24–251 (QQDTDHFANV…IFQLQRNIGY (228 aa)). N-linked (GlcNAc...) asparagine glycosylation is found at N32, N98, N106, and N152. Cysteines 167 and 181 form a disulfide. The next 3 membrane-spanning stretches (helical) occupy residues 252–273 (FIFQ…SFWI), 278–299 (TSAR…SNGV), and 311–333 (AIDI…YAAV). Residues 334-475 (NYTYWGARAK…RVQDVNTIDK (142 aa)) are Cytoplasmic-facing. Residues 476–499 (YARLMFPLLFIIFNTSYWSVYLLT) form a helical membrane-spanning segment.

Belongs to the ligand-gated ion channel (TC 1.A.9) family. Gamma-aminobutyric acid receptor (TC 1.A.9.5) subfamily. In terms of assembly, generally pentameric. There are five types of GABA(A) receptor chains: alpha, beta, gamma, delta, and rho.

The protein resides in the postsynaptic cell membrane. The protein localises to the cell membrane. GABA, an inhibitory neurotransmitter, mediates neuronal inhibition by binding to the GABA/benzodiazepine receptor and opening an integral chloride channel. The protein is Gamma-aminobutyric acid receptor subunit beta of Lymnaea stagnalis (Great pond snail).